We begin with the raw amino-acid sequence, 777 residues long: Serine/threonine-protein kinase PTK2 (777 aa).

A disordered region spans residues 21–174; sequence NKLRGNNDST…ISSGSASSTN (154 aa). A compositionally biased stretch (low complexity) spans 30–41; sequence TPAAAPAPVPTK. 2 stretches are compositionally biased toward polar residues: residues 50-61 and 83-133; these read AHISRSASTNTP and RRST…SQHM. Positions 149–172 are enriched in low complexity; it reads SSVRGSSYSRHGSGSHISSGSASS. The Protein kinase domain occupies 222 to 529; the sequence is DKDNKTIGSG…MEDLFNDPWF (308 aa). Residues 228 to 236 and K252 each bind ATP; that span reads IGSGGSSEV. D355 acts as the Proton acceptor in catalysis. 2 disordered regions span residues 564-705 and 728-764; these read DAHP…EITE and SVSGAATAPIPRRDPSNRSIHSNATSTGTAGRKKKVV. Composition is skewed to polar residues over residues 575-592 and 648-672; these read TDTNGGLHSDSENPAGTH and TNTTAEADNEKAQTVPTSAVDTNEF. The segment covering 677-694 has biased composition (low complexity); the sequence is NATTTDNDNVNTKATTAD. Over residues 744–756 the composition is skewed to polar residues; that stretch reads NRSIHSNATSTGT.

It belongs to the protein kinase superfamily. Ser/Thr protein kinase family.

It carries out the reaction L-seryl-[protein] + ATP = O-phospho-L-seryl-[protein] + ADP + H(+). The enzyme catalyses L-threonyl-[protein] + ATP = O-phospho-L-threonyl-[protein] + ADP + H(+). The sequence is that of Serine/threonine-protein kinase PTK2 (PTK2) from Candida glabrata (strain ATCC 2001 / BCRC 20586 / JCM 3761 / NBRC 0622 / NRRL Y-65 / CBS 138) (Yeast).